The chain runs to 240 residues: LexA repressor (240 aa).

A DNA-binding region (H-T-H motif) is located at residues 26–46 (FDEMKEALDLASKSGIHRLIT). Active-site for autocatalytic cleavage activity residues include serine 161 and lysine 199.

It belongs to the peptidase S24 family. In terms of assembly, homodimer.

It catalyses the reaction Hydrolysis of Ala-|-Gly bond in repressor LexA.. Its function is as follows. Represses a number of genes involved in the response to DNA damage (SOS response), including recA and lexA. In the presence of single-stranded DNA, RecA interacts with LexA causing an autocatalytic cleavage which disrupts the DNA-binding part of LexA, leading to derepression of the SOS regulon and eventually DNA repair. In Brucella melitensis biotype 1 (strain ATCC 23456 / CCUG 17765 / NCTC 10094 / 16M), this protein is LexA repressor.